A 281-amino-acid chain; its full sequence is Elongation factor 1-delta (281 aa).

N-acetylalanine is present on Ala-2. The residue at position 17 (Lys-17) is an N6-acetyllysine. Phosphoserine is present on residues Ser-37, Ser-44, Ser-60, Ser-86, and Ser-106. Residues 80 to 115 (LVVRIASLEVENQSLRGVVQELQQAISKLEARLNVL) are leucine-zipper. An N6-acetyllysine modification is found at Lys-107. An N6-acetyllysine; alternate modification is found at Lys-117. At Lys-117 the chain carries N6-succinyllysine; alternate. The disordered stretch occupies residues 118 to 172 (SSPGHRATAPQTQHVSPMRQVEPPAKKPATPAEDDEDDDIDLFGSDNEEEDKEAA). Position 119 is a phosphoserine (Ser-119). At Thr-129 the chain carries Phosphothreonine. Position 133 is a phosphoserine (Ser-133). Thr-147 carries the post-translational modification Phosphothreonine. The span at 149–169 (AEDDEDDDIDLFGSDNEEEDK) shows a compositional bias: acidic residues. Ser-162 carries the post-translational modification Phosphoserine; by CK2. The interval 173–281 (QLREERLRQY…SVDIAAFNKI (109 aa)) is catalytic (GEF).

The protein belongs to the EF-1-beta/EF-1-delta family. In terms of assembly, EF-1 is composed of 4 subunits: alpha, beta, delta isoform 1, and gamma. Isoform 2 interacts with HSF1 and NFE2L2.

It is found in the nucleus. EF-1-beta and EF-1-delta stimulate the exchange of GDP bound to EF-1-alpha to GTP, regenerating EF-1-alpha for another round of transfer of aminoacyl-tRNAs to the ribosome. Its function is as follows. Regulates induction of heat-shock-responsive genes through association with heat shock transcription factors and direct DNA-binding at heat shock promoter elements (HSE). This chain is Elongation factor 1-delta (EEF1D), found in Macaca fascicularis (Crab-eating macaque).